A 120-amino-acid polypeptide reads, in one-letter code: Glycine cleavage system H protein (120 aa).

The Lipoyl-binding domain occupies 19 to 101; that stretch reads DGTVGISDFA…YTDGWLFRLD (83 aa). N6-lipoyllysine is present on Lys-60.

Belongs to the GcvH family. The glycine cleavage system is composed of four proteins: P, T, L and H. (R)-lipoate is required as a cofactor.

In terms of biological role, the glycine cleavage system catalyzes the degradation of glycine. The H protein shuttles the methylamine group of glycine from the P protein to the T protein. This chain is Glycine cleavage system H protein, found in Deinococcus geothermalis (strain DSM 11300 / CIP 105573 / AG-3a).